Here is a 286-residue protein sequence, read N- to C-terminus: 2-oxoglutarate synthase subunit KorB (286 aa).

Heterotetramer of the KorA, KorB, KorC and KorD subunits.

It carries out the reaction 2 oxidized [2Fe-2S]-[ferredoxin] + 2-oxoglutarate + CoA = succinyl-CoA + 2 reduced [2Fe-2S]-[ferredoxin] + CO2 + H(+). The chain is 2-oxoglutarate synthase subunit KorB (korB) from Methanothermobacter thermautotrophicus (strain ATCC 29096 / DSM 1053 / JCM 10044 / NBRC 100330 / Delta H) (Methanobacterium thermoautotrophicum).